A 462-amino-acid chain; its full sequence is Zinc transporter zipt-7.2 (462 aa).

A helical membrane pass occupies residues leucine 2–leucine 22. The interval histidine 39 to alanine 134 is disordered. Over residues histidine 40–glycine 51 the composition is skewed to basic residues. Positions alanine 65–alanine 74 are enriched in low complexity. The span at alanine 75 to histidine 94 shows a compositional bias: basic and acidic residues. The span at histidine 111–histidine 120 shows a compositional bias: basic residues. The segment covering serine 121–glutamate 132 has biased composition (basic and acidic residues). Residues alanine 161 to isoleucine 181 form a helical membrane-spanning segment. N-linked (GlcNAc...) asparagine glycosylation occurs at asparagine 184. A helical transmembrane segment spans residues valine 194 to histidine 214. The segment at glycine 219 to histidine 239 is disordered. Residues methionine 244–valine 264 traverse the membrane as a helical segment. Positions glutamate 270 to aspartate 307 are disordered. Over residues histidine 281–aspartate 307 the composition is skewed to basic and acidic residues. A glycan (N-linked (GlcNAc...) asparagine) is linked at asparagine 326. The next 3 helical transmembrane spans lie at isoleucine 333 to valine 353, alanine 376 to phenylalanine 396, and serine 410 to proline 430. Asparagine 435 carries N-linked (GlcNAc...) asparagine glycosylation. A helical transmembrane segment spans residues threonine 441–tyrosine 461.

This sequence belongs to the ZIP transporter (TC 2.A.5) family. KE4/Catsup subfamily. As to expression, expressed in somatic tissues.

Its subcellular location is the membrane. In terms of biological role, zinc transporter. The chain is Zinc transporter zipt-7.2 from Caenorhabditis elegans.